The following is a 184-amino-acid chain: MANEQNEQSQDLSSEQTTQDHEQTQTEGVEQGAEISVEDLKAQIGKLEESLKLEKARTANAVYEAEKVKERAEREADTAKKFALEKFAKSLLDSVDNLERAIQAAGKEKTPLLEGVELTLKSLTTTLEKFDVVSVDTTNGFNAELHQAVGIDPNAKSGEIGNVLQKGYTLSGRLLRPAMVTVGQ.

Residues 1–14 are compositionally biased toward polar residues; sequence MANEQNEQSQDLSS. Residues 1–35 are disordered; that stretch reads MANEQNEQSQDLSSEQTTQDHEQTQTEGVEQGAEI.

Belongs to the GrpE family. As to quaternary structure, homodimer.

It localises to the cytoplasm. Functionally, participates actively in the response to hyperosmotic and heat shock by preventing the aggregation of stress-denatured proteins, in association with DnaK and GrpE. It is the nucleotide exchange factor for DnaK and may function as a thermosensor. Unfolded proteins bind initially to DnaJ; upon interaction with the DnaJ-bound protein, DnaK hydrolyzes its bound ATP, resulting in the formation of a stable complex. GrpE releases ADP from DnaK; ATP binding to DnaK triggers the release of the substrate protein, thus completing the reaction cycle. Several rounds of ATP-dependent interactions between DnaJ, DnaK and GrpE are required for fully efficient folding. The polypeptide is Protein GrpE (Acinetobacter baylyi (strain ATCC 33305 / BD413 / ADP1)).